Here is a 643-residue protein sequence, read N- to C-terminus: Phosphomethylpyrimidine synthase (643 aa).

Substrate contacts are provided by residues Asn-248, Met-277, Tyr-306, His-342, 362–364 (SRG), 403–406 (DGLR), and Glu-442. His-446 is a Zn(2+) binding site. A substrate-binding site is contributed by Tyr-469. His-510 provides a ligand contact to Zn(2+). Residues Cys-590, Cys-593, and Cys-598 each coordinate [4Fe-4S] cluster.

This sequence belongs to the ThiC family. Homodimer. Requires [4Fe-4S] cluster as cofactor.

It catalyses the reaction 5-amino-1-(5-phospho-beta-D-ribosyl)imidazole + S-adenosyl-L-methionine = 4-amino-2-methyl-5-(phosphooxymethyl)pyrimidine + CO + 5'-deoxyadenosine + formate + L-methionine + 3 H(+). It functions in the pathway cofactor biosynthesis; thiamine diphosphate biosynthesis. Functionally, catalyzes the synthesis of the hydroxymethylpyrimidine phosphate (HMP-P) moiety of thiamine from aminoimidazole ribotide (AIR) in a radical S-adenosyl-L-methionine (SAM)-dependent reaction. In Burkholderia multivorans (strain ATCC 17616 / 249), this protein is Phosphomethylpyrimidine synthase.